The following is a 284-amino-acid chain: uncharacterized protein (284 aa).

The N-terminal stretch at 1-21 (MKTTMLMLVLLVCSYIHYVCA) is a signal peptide. The next 3 helical transmembrane spans lie at 88 to 108 (AGPFAISQVFGPAGRLYFLWA), 144 to 164 (ALGVYPYVPTLTGFSTFLGVW), and 212 to 232 (VFTTFAGPPIATSTVFASPTY).

The protein localises to the membrane. This is an uncharacterized protein from Schizosaccharomyces pombe (strain 972 / ATCC 24843) (Fission yeast).